The chain runs to 482 residues: Alanine aminotransferase 2 (482 aa).

At K299 the chain carries N6-(pyridoxal phosphate)lysine.

Belongs to the class-I pyridoxal-phosphate-dependent aminotransferase family. Alanine aminotransferase subfamily. As to quaternary structure, homodimer. It depends on pyridoxal 5'-phosphate as a cofactor.

The enzyme catalyses L-alanine + 2-oxoglutarate = pyruvate + L-glutamate. It participates in photosynthesis; C4 acid pathway. It functions in the pathway amino-acid degradation; L-alanine degradation via transaminase pathway; pyruvate from L-alanine: step 1/1. Its function is as follows. Transfer of C3 units between the cytosol of mesophyll and bundle sheath cells to maintain a nitrogen-carbon balance in the C4-dicarboxylic pathway. This is Alanine aminotransferase 2 from Hordeum vulgare (Barley).